The chain runs to 183 residues: Small ribosomal subunit protein uS4c (183 aa).

Positions 82–143 (MRLDNILFRL…KQRSKALIQN (62 aa)) constitute an S4 RNA-binding domain.

The protein belongs to the universal ribosomal protein uS4 family. As to quaternary structure, part of the 30S ribosomal subunit. Contacts protein S5. The interaction surface between S4 and S5 is involved in control of translational fidelity.

The protein localises to the plastid. The protein resides in the chloroplast. One of the primary rRNA binding proteins, it binds directly to 16S rRNA where it nucleates assembly of the body of the 30S subunit. Functionally, with S5 and S12 plays an important role in translational accuracy. The protein is Small ribosomal subunit protein uS4c (rps4) of Gladiolus communis (Cornflag).